Here is a 341-residue protein sequence, read N- to C-terminus: tRNA (guanine-N(7)-)-methyltransferase (341 aa).

Residues glutamate 75, glutamate 100, aspartate 127, and aspartate 150 each coordinate S-adenosyl-L-methionine. Aspartate 150 is a catalytic residue. Lysine 154 contacts substrate. The tract at residues 156-161 (RHNKRR) is interaction with RNA. Aspartate 186 is a binding site for substrate.

It belongs to the class I-like SAM-binding methyltransferase superfamily. TrmB family.

The enzyme catalyses guanosine(46) in tRNA + S-adenosyl-L-methionine = N(7)-methylguanosine(46) in tRNA + S-adenosyl-L-homocysteine. It participates in tRNA modification; N(7)-methylguanine-tRNA biosynthesis. Catalyzes the formation of N(7)-methylguanine at position 46 (m7G46) in tRNA. This chain is tRNA (guanine-N(7)-)-methyltransferase, found in Xanthomonas euvesicatoria pv. vesicatoria (strain 85-10) (Xanthomonas campestris pv. vesicatoria).